Consider the following 573-residue polypeptide: Potassium-transporting ATPase potassium-binding subunit (573 aa).

10 helical membrane passes run 6–26 (ILFA…GSYI), 66–86 (FFSL…ILLL), 135–155 (ALAV…IALI), 177–197 (IFWI…FQGV), 257–277 (IQMV…GKWV), 283–303 (GWLI…VMTI), 382–402 (IFGG…LAVF), 428–448 (MFAL…AAVI), 493–513 (ITIA…VIML), and 537–557 (FIFA…TIFP).

It belongs to the KdpA family. In terms of assembly, the system is composed of three essential subunits: KdpA, KdpB and KdpC.

Its subcellular location is the cell inner membrane. In terms of biological role, part of the high-affinity ATP-driven potassium transport (or Kdp) system, which catalyzes the hydrolysis of ATP coupled with the electrogenic transport of potassium into the cytoplasm. This subunit binds the periplasmic potassium ions and delivers the ions to the membrane domain of KdpB through an intramembrane tunnel. This is Potassium-transporting ATPase potassium-binding subunit from Francisella tularensis subsp. novicida (strain U112).